The sequence spans 366 residues: Fructose-bisphosphate aldolase 2 (366 aa).

Substrate is bound by residues Arg-60 and Lys-150. The active-site Proton acceptor is the Glu-191. Lys-233 (schiff-base intermediate with dihydroxyacetone-P) is an active-site residue.

The protein belongs to the class I fructose-bisphosphate aldolase family.

The catalysed reaction is beta-D-fructose 1,6-bisphosphate = D-glyceraldehyde 3-phosphate + dihydroxyacetone phosphate. It functions in the pathway carbohydrate degradation; glycolysis; D-glyceraldehyde 3-phosphate and glycerone phosphate from D-glucose: step 4/4. The sequence is that of Fructose-bisphosphate aldolase 2 (aldo-2) from Caenorhabditis elegans.